Here is a 338-residue protein sequence, read N- to C-terminus: N-acetylmuramate/N-acetylglucosamine kinase (338 aa).

Belongs to the kinase AmgK family.

The catalysed reaction is N-acetyl-D-muramate + ATP = N-acetyl-alpha-D-muramate 1-phosphate + ADP + H(+). It carries out the reaction N-acetyl-D-glucosamine + ATP = N-acetyl-alpha-D-glucosamine 1-phosphate + ADP + H(+). It functions in the pathway cell wall biogenesis; peptidoglycan recycling. Sugar kinase that catalyzes the ATP-dependent phosphorylation of N-acetylmuramate (MurNAc) and N-acetylglucosamine (GlcNAc) at its C1 hydroxyl group, leading to MurNAc alpha-1P and GlcNAc alpha-1P, respectively. Is involved in peptidoglycan recycling as part of a cell wall recycling pathway that bypasses de novo biosynthesis of the peptidoglycan precursor UDP-MurNAc. Plays a role in intrinsic resistance to fosfomycin, which targets the de novo synthesis of UDP-MurNAc. The chain is N-acetylmuramate/N-acetylglucosamine kinase from Pseudomonas aeruginosa (strain ATCC 15692 / DSM 22644 / CIP 104116 / JCM 14847 / LMG 12228 / 1C / PRS 101 / PAO1).